A 139-amino-acid chain; its full sequence is MRVNRPQCARVPYSAESLVRVEASWYGRTLRAIPEVLSQVGYQQADHGESLLTSHHCCLGAAEGARPGWVGSSAGALSGLLDSWAEASTAHAARIGDHSYGMHLAAVGFAEMEEHNAAALAAVYPTGGGSARCDGVDVS.

This sequence to M.tuberculosis Rv2798c.

This is an uncharacterized protein from Mycobacterium tuberculosis (strain CDC 1551 / Oshkosh).